Consider the following 548-residue polypeptide: Cytochrome P450 monooxygenase hepE (548 aa).

Cysteine 485 is a binding site for heme.

This sequence belongs to the cytochrome P450 family. The cofactor is heme.

The protein operates within secondary metabolite biosynthesis. Its function is as follows. Cytochrome P450 monooxygenase; part of the gene cluster that mediates the biosynthesis of heptelidic acid (HA), a sesquiterpene lactone that acts as an inhibitor of glyceraldehyde-3-phosphatedehydrogenase (GAPDH) and a growth inhibitor of the salt-tolerant lactic acid bacteria in soy sauce brewing. The chain is Cytochrome P450 monooxygenase hepE from Aspergillus oryzae (strain ATCC 42149 / RIB 40) (Yellow koji mold).